Reading from the N-terminus, the 103-residue chain is PTS system oligo-beta-mannoside-specific EIIB component (103 aa).

The PTS EIIB type-3 domain maps to 1 to 103; that stretch reads MKKILLACSS…EQALSLMVNQ (103 aa). The active-site Phosphocysteine intermediate is C8. Position 8 is a phosphocysteine; by EIIA (C8).

The protein localises to the cytoplasm. The enzyme catalyses D-cellobiose(out) + N(pros)-phospho-L-histidyl-[protein] = 6-phospho-beta-D-glucosyl-(1-&gt;4)-D-glucose(in) + L-histidyl-[protein]. Functionally, the phosphoenolpyruvate-dependent sugar phosphotransferase system (sugar PTS), a major carbohydrate active transport system, catalyzes the phosphorylation of incoming sugar substrates concomitantly with their translocation across the cell membrane. The enzyme II GmuABC PTS system is involved in the transport of oligo-glucomannans such as cellobiose or mannobiose. This is PTS system oligo-beta-mannoside-specific EIIB component from Bacillus subtilis (strain 168).